Here is a 172-residue protein sequence, read N- to C-terminus: Adenine phosphoribosyltransferase (172 aa).

The protein belongs to the purine/pyrimidine phosphoribosyltransferase family. As to quaternary structure, homodimer.

The protein resides in the cytoplasm. The enzyme catalyses AMP + diphosphate = 5-phospho-alpha-D-ribose 1-diphosphate + adenine. Its pathway is purine metabolism; AMP biosynthesis via salvage pathway; AMP from adenine: step 1/1. Functionally, catalyzes a salvage reaction resulting in the formation of AMP, that is energically less costly than de novo synthesis. This is Adenine phosphoribosyltransferase from Staphylococcus aureus (strain Mu3 / ATCC 700698).